We begin with the raw amino-acid sequence, 370 residues long: Peptidyl-prolyl cis-trans isomerase D (370 aa).

Ser-5 bears the Phosphoserine mark. In terms of domain architecture, PPIase cyclophilin-type spans 19–183; it reads FFDVDIGGER…KLCVIAECGE (165 aa). Lys-171 carries the N6-acetyllysine modification. Residues 185 to 215 are chaperone activity; sequence KEGDEWGIFPKDGSGDSHPDFPEDADIDLKD. Ser-198 is subject to Phosphoserine. Residues 214-370 are interaction with HSP90AB1; sequence KDVDKILLIS…EKAVYAKMFA (157 aa). TPR repeat units follow at residues 223-256, 273-306, and 308-340; these read SEDLKNIGNTFFKSQNWEMAIKKYAKVLRYLDSS, LSCVLNIGACKLKMSNWQGAIDSCLEALEMDPSN, and KALYRKAQGWQGLKEYDQALADLKKAQEIAPGD.

The protein belongs to the cyclophilin-type PPIase family. PPIase D subfamily. Identified in ESR1 or NR3C1/GCR steroid receptor-chaperone complexes. Found in HSP90 chaperone complexes with kinase clients LCK or EIF2AK1. Two monomers associate with one HSP90 homodimer. Interacts with HSP90AA1. Interacts with HSP90AB1; PPID and FKBP4 compete for binding to HSP90AB1 and the interaction is mutually exclusive with the PPID:HSPA8 interaction. Interacts with HSPA8; PPID and STIP1 but not FKBP4 compete for binding to HSPA8 and the interaction is mutually exclusive with the PPID:HSP90AB1 interaction. Interacts with S100A1 and S100A2; the interactions dissociate the PPID:HSP90AA1 interaction. Interacts with S100A6. Interacts with MYB, ILF2, XRCC6, RACK1 and RPS3. Interacts with cytoplasmic dynein 1 intermediate chain (DYNC1I1 or DYNC1I2).

It localises to the cytoplasm. The protein localises to the nucleus. It is found in the nucleolus. The protein resides in the nucleoplasm. The enzyme catalyses [protein]-peptidylproline (omega=180) = [protein]-peptidylproline (omega=0). Less sensitive to inhibition by cyclosporin A than is CYP-18. PPIase that catalyzes the cis-trans isomerization of proline imidic peptide bonds in oligopeptides and may therefore assist protein folding. Proposed to act as a co-chaperone in HSP90 complexes such as in unligated steroid receptors heterocomplexes. Different co-chaperones seem to compete for association with HSP90 thus establishing distinct HSP90-co-chaperone-receptor complexes with the potential to exert tissue-specific receptor activity control. May have a preference for estrogen receptor complexes and is not found in glucocorticoid receptor complexes. May be involved in cytoplasmic dynein-dependent movement of the receptor from the cytoplasm to the nucleus. May regulate MYB by inhibiting its DNA-binding activity. Involved in regulation of AHR signaling by promoting the formation of the AHR:ARNT dimer; the function is independent of HSP90 but requires the chaperone activity region. Involved in regulation of UV radiation-induced apoptosis. This Rattus norvegicus (Rat) protein is Peptidyl-prolyl cis-trans isomerase D.